The primary structure comprises 433 residues: Cell division protein FtsZ homolog 1, chloroplastic (433 aa).

The N-terminal 66 residues, 1-66, are a transit peptide targeting the chloroplast; the sequence is MAIIPLAQLN…TRSKSMRLRC (66 aa). Residue Ser-67 is modified to N-acetylserine. GTP is bound by residues 83–87, 170–172, Glu-201, Arg-205, and Asp-249; these read GGGNN and GTG. The segment at 399–433 is disordered; that stretch reads GSSGQQENKGMSLPHQKQSPSTISTKSSSPRRLFF. Low complexity predominate over residues 414-433; that stretch reads QKQSPSTISTKSSSPRRLFF.

This sequence belongs to the FtsZ family. In terms of assembly, aggregates to form a contractile ring-like structure; contraction of the ring was accompanied by an increase in the filament turnover rate. This aggregation is regulated in midchloroplast stroma by MIND1 (repressor) and MINE1 (promoter). Self-interacts and binds to FTSZ2-1 in heteromers to form two morphologically distinct types of filaments, termed type-I (smooth filaments) and type-II (rough filaments), in a GTP-dependent manner. Interacts with ARC3. Part of a complex made of ARC3, ARC6, FTSZ1 and FTSZ2. As to expression, in pollen grain, restricted to plastids of vegetative cells. Also present in pollen tubes plastids.

The protein localises to the plastid. The protein resides in the chloroplast stroma. It is found in the chloroplast thylakoid membrane. In terms of biological role, exhibits GTPase activity. Component of the plastid division machinery that forms a contractile ring at the division site. Required for plastid division in a dose-dependent manner. Involved in epidermal plastids division in a MINE1-dependent manner. Involved in blue light-induced chloroplast movements. May regulate thylakoid development. In the vegetative shoot apex, at the shoot apical meristem (SAM), where the proplastid-to-chloroplast transition takes place, contributes equally with FTSZ2-1 in the L2 layer to plastid division. This is Cell division protein FtsZ homolog 1, chloroplastic from Arabidopsis thaliana (Mouse-ear cress).